A 341-amino-acid polypeptide reads, in one-letter code: HTH-type transcriptional repressor PurR (341 aa).

Residues 2–56 enclose the HTH lacI-type domain; the sequence is ATIKDVAKRAGVSTTTVSHVINKTRFVADETREAVWVAIKELHYSPSAVARSLKV. A DNA-binding region (H-T-H motif) is located at residues 4 to 23; that stretch reads IKDVAKRAGVSTTTVSHVIN. Residues 48 to 56 mediate DNA binding; the sequence is SAVARSLKV. Y73, R190, T192, F221, and D275 together coordinate hypoxanthine.

Homodimer.

The protein operates within purine metabolism; purine nucleotide biosynthesis [regulation]. In terms of biological role, is the main repressor of the genes involved in the de novo synthesis of purine nucleotides, regulating purB, purC, purEK, purF, purHD, purL, purMN and guaBA expression. PurR is allosterically activated to bind its cognate DNA by binding the purine corepressors, hypoxanthine or guanine, thereby effecting transcription repression. The protein is HTH-type transcriptional repressor PurR of Erwinia tasmaniensis (strain DSM 17950 / CFBP 7177 / CIP 109463 / NCPPB 4357 / Et1/99).